Here is a 165-residue protein sequence, read N- to C-terminus: MEMFQGLLLLLLLSMGGTWASKEPLRPRCRPINATLAVEKEGCPVCITVNTTICAGYCPTMTRVLQGVLPALPQVVCNYRDVRFESIRLPGCPRGVNPVVSYAVALSCQCALCRRSTTDCGGPKDHPLTCDDPRFQDSSSSKAPPPSLPSPSRLPGPSDTPILPQ.

Positions 1-20 (MEMFQGLLLLLLLSMGGTWA) are cleaved as a signal peptide. 6 disulfide bridges follow: cysteine 29–cysteine 77, cysteine 43–cysteine 92, cysteine 46–cysteine 130, cysteine 54–cysteine 108, cysteine 58–cysteine 110, and cysteine 113–cysteine 120. Asparagine 33 and asparagine 50 each carry an N-linked (GlcNAc...) asparagine glycan. Positions 131 to 165 (DDPRFQDSSSSKAPPPSLPSPSRLPGPSDTPILPQ) are disordered. Serine 141, serine 147, serine 152, and serine 158 each carry an O-linked (GalNAc...) serine glycan. Residues 143-154 (APPPSLPSPSRL) show a composition bias toward pro residues.

It belongs to the glycoprotein hormones subunit beta family. Heterodimer of a common alpha chain identical in LH, FSH, TSH and HCG and a unique beta chain distinct in each of the hormones. In terms of tissue distribution, high expression in the placenta throughout pregnancy.

It localises to the secreted. Beta subunit of the human chorionic gonadotropin (hCG). hCG is a complex glycoprotein composed of two glycosylated subunits alpha and beta which are non-covalently associated. The alpha subunit is identical to those in the pituitary gonadotropin hormones (LH, FSH and TSH). The beta subunits are distinct in each of the hormones and confer receptor and biological specificity. Has an essential role in pregnancy and maternal adaptation. Stimulates the ovaries to synthesize the steroids that are essential for the maintenance of pregnancy. The protein is Choriogonadotropin subunit beta 3 (CGB3) of Homo sapiens (Human).